Consider the following 1705-residue polypeptide: Protein TIC 214 (1705 aa).

5 helical membrane-spanning segments follow: residues I18–G38, F67–L87, L127–L147, V175–I195, and S218–G238.

This sequence belongs to the TIC214 family. Part of the Tic complex.

It localises to the plastid. It is found in the chloroplast inner membrane. Involved in protein precursor import into chloroplasts. May be part of an intermediate translocation complex acting as a protein-conducting channel at the inner envelope. In Helianthus annuus (Common sunflower), this protein is Protein TIC 214.